Here is a 642-residue protein sequence, read N- to C-terminus: Protein INCREASED PETAL GROWTH ANISOTROPY 1 (642 aa).

The interval 1–60 (MVAGKVRVTMGFHKSPSTKKTKDMPSPLPLPPPPPPPLKPPSSGSATTKPPINPSKPGFT) is disordered. Residues 26 to 40 (SPLPLPPPPPPPLKP) are compositionally biased toward pro residues. The stretch at 80–183 (AASHNGVVSE…EAEIVELRKL (104 aa)) forms a coiled coil. The tract at residues 223-351 (NLPEPITNQE…PPKSLSIASA (129 aa)) is disordered. Over residues 247 to 256 (DIYRKDEIES) the composition is skewed to basic and acidic residues. Low complexity predominate over residues 258–277 (SRSSNSEELTESSSLSTVRS). A compositionally biased stretch (pro residues) spans 302-344 (DPPPQKSIPPPPPPPPPPLLQQPPPPPSVSKAPPPPPPPPPPK).

This sequence belongs to the IPGA1 family. Associates to cortical microtubules via its N-terminal region. Interacts with ANGUSTIFOLIA (AN) on microtubule upon mechanical stress to regulate microtubule organization. Binds to the microtubule-severing enzyme KATANIN (KTN1). In terms of tissue distribution, expressed ubiquitously at all development stages, with highest in developing petals. During mechanical stress, accumulates in granules on microtubules.

The protein localises to the cytoplasm. The protein resides in the cytoskeleton. Its subcellular location is the cytosol. It is found in the cell membrane. Its function is as follows. Microtubule-associated protein involved in the regulation of anisotropic petal and cotyledons growth and shape by affecting cortical microtubule organization. Prevents cortical microtubules organization into parallel arrays oriented perpendicular to the axis of cell elongation thus limiting anisotropic cell growth in the late phases of petal development. Cooperatively with ANGUSTIFOLIA (AN), negatively regulates cortical microtubules (CMTs) organization in response to mechanical stress and modulates pavement cells morphogenesis leading to puzzle shape, probably in an AAA1/KTN1-dependent manner. The protein is Protein INCREASED PETAL GROWTH ANISOTROPY 1 of Arabidopsis thaliana (Mouse-ear cress).